Consider the following 665-residue polypeptide: DNA ligase (665 aa).

Residues 32–36 (DSEYD), 81–82 (SL), and E110 contribute to the NAD(+) site. Catalysis depends on K112, which acts as the N6-AMP-lysine intermediate. NAD(+) is bound by residues R133, E167, K283, and K307. Residues C401, C404, C419, and C424 each contribute to the Zn(2+) site. The BRCT domain occupies 586-665 (EGHPDFSGKT…AAFIEKQNGI (80 aa)).

The protein belongs to the NAD-dependent DNA ligase family. LigA subfamily. Mg(2+) serves as cofactor. Requires Mn(2+) as cofactor.

It carries out the reaction NAD(+) + (deoxyribonucleotide)n-3'-hydroxyl + 5'-phospho-(deoxyribonucleotide)m = (deoxyribonucleotide)n+m + AMP + beta-nicotinamide D-nucleotide.. DNA ligase that catalyzes the formation of phosphodiester linkages between 5'-phosphoryl and 3'-hydroxyl groups in double-stranded DNA using NAD as a coenzyme and as the energy source for the reaction. It is essential for DNA replication and repair of damaged DNA. The protein is DNA ligase of Staphylococcus epidermidis (strain ATCC 12228 / FDA PCI 1200).